Consider the following 313-residue polypeptide: Foldase protein PrsA (313 aa).

The first 20 residues, 1–20, serve as a signal peptide directing secretion; sequence MKKKLLAGAITLLSVATLAA. The N-palmitoyl cysteine moiety is linked to residue C21. C21 is lipidated: S-diacylglycerol cysteine. The PpiC domain maps to 143–241; the sequence is TPDVTAQIIR…SQYYIVKLTK (99 aa).

This sequence belongs to the PrsA family.

It localises to the cell membrane. It catalyses the reaction [protein]-peptidylproline (omega=180) = [protein]-peptidylproline (omega=0). Functionally, plays a major role in protein secretion by helping the post-translocational extracellular folding of several secreted proteins. This chain is Foldase protein PrsA, found in Streptococcus pneumoniae (strain P1031).